Here is a 215-residue protein sequence, read N- to C-terminus: Ribosomal RNA small subunit methyltransferase G (215 aa).

Residues glycine 73, leucine 78, 125-126 (AE), and arginine 140 each bind S-adenosyl-L-methionine.

Belongs to the methyltransferase superfamily. RNA methyltransferase RsmG family.

It is found in the cytoplasm. Specifically methylates the N7 position of guanine in position 518 of 16S rRNA. The polypeptide is Ribosomal RNA small subunit methyltransferase G (Renibacterium salmoninarum (strain ATCC 33209 / DSM 20767 / JCM 11484 / NBRC 15589 / NCIMB 2235)).